The primary structure comprises 172 residues: DNA-directed RNA polymerase II subunit RPB7 (172 aa).

It belongs to the eukaryotic RPB7/RPC8 RNA polymerase subunit family. In terms of assembly, component of the RNA polymerase II (Pol II) complex consisting of 12 subunits. RPB4 and RPB7 form a subcomplex that protrudes from the 10-subunit Pol II core complex.

It is found in the nucleus. In terms of biological role, DNA-dependent RNA polymerase catalyzes the transcription of DNA into RNA using the four ribonucleoside triphosphates as substrates. Component of RNA polymerase II which synthesizes mRNA precursors and many functional non-coding RNAs. Pol II is the central component of the basal RNA polymerase II transcription machinery. It is composed of mobile elements that move relative to each other. RPB7 is part of a subcomplex with RPB4 that binds to a pocket formed by RPB1, RPB2 and RPB6 at the base of the clamp element. The RPB4-RPB7 subcomplex seems to lock the clamp via RPB7 in the closed conformation thus preventing double-stranded DNA to enter the active site cleft. The RPB4-RPB7 subcomplex binds single-stranded DNA and RNA. The protein is DNA-directed RNA polymerase II subunit RPB7 (polr2g) of Danio rerio (Zebrafish).